A 60-amino-acid chain; its full sequence is UPF0337 protein asr4653 (60 aa).

The protein belongs to the UPF0337 (CsbD) family.

The polypeptide is UPF0337 protein asr4653 (Nostoc sp. (strain PCC 7120 / SAG 25.82 / UTEX 2576)).